The following is a 430-amino-acid chain: Tektin-2 (430 aa).

2 coiled-coil regions span residues 82 to 160 (LTDL…QAFE) and 273 to 379 (EKVY…DIAC).

Belongs to the tektin family. Microtubule inner protein component of sperm flagellar doublet microtubules. May interact with CCDC172. Tyrosine phosphorylated. In terms of processing, ubiquitinated, leading to its degradation. Deubiquitinated by USP16, promoting its stability.

It localises to the cytoplasm. The protein resides in the cytoskeleton. It is found in the cilium axoneme. Its subcellular location is the flagellum axoneme. The protein localises to the microtubule organizing center. Functionally, microtubule inner protein (MIP) part of the dynein-decorated doublet microtubules (DMTs) in cilia and flagellar axoneme. Plays a key role in the assembly or attachment of the inner dynein arm to microtubules in sperm flagella and tracheal cilia. Forms filamentous polymers in the walls of ciliary and flagellar microtubules. In Macaca fascicularis (Crab-eating macaque), this protein is Tektin-2 (TEKT2).